Consider the following 525-residue polypeptide: Sterol O-acyltransferase 2 (525 aa).

Disordered regions lie at residues 1-34 and 77-97; these read MQPKVPQLRRREGLGEEQEKGARGGEGNARTHGT and QDRPLPSAAPDSTSKTQELHP. Residues 1 to 119 lie on the Cytoplasmic side of the membrane; the sequence is MQPKVPQLRR…IDELMEVQHF (119 aa). The span at 9-23 shows a compositional bias: basic and acidic residues; that stretch reads RRREGLGEEQEKGAR. A cholesterol-binding site is contributed by His-118. Residues 120 to 141 form a helical membrane-spanning segment; sequence RTIYHMFIAGLCVLIISTLAID. Topologically, residues 142–161 are lumenal; that stretch reads FIDEGRLMLEFDLLLFSFGQ. A helical transmembrane segment spans residues 162–187; that stretch reads LPLALMTWVPMFLSTLLVPYQTLWLW. Over 188-199 the chain is Cytoplasmic; sequence ARPRAGGAWMLG. Residues 200–223 form a helical membrane-spanning segment; sequence ASLGCVLLAAHAVVLCVLPVHVSV. Over 224 to 231 the chain is Lumenal; sequence RHELPPAS. Residues 232-255 traverse the membrane as a helical segment; sequence RCVLVFEQVRLLMKSYSFLRETVP. Residues 256–296 lie on the Cytoplasmic side of the membrane; the sequence is GIFCVRGGKGISPPSFSSYLYFLFCPTLIYRETYPRTPSIR. Cys-280 carries the post-translational modification Cysteine sulfenic acid (-SOH); alternate. Residue Cys-280 forms a Glycyl cysteine thioester (Cys-Gly) (interchain with G-Cter in ubiquitin); alternate linkage. The helical transmembrane segment at 297-329 threads the bilayer; that stretch reads WNYVAKNFAQVLGCLLYACFILGRLCVPVFANM. Residues 330–346 are Lumenal-facing; sequence SREPFSTRALLLSILHA. A helical membrane pass occupies residues 347-372; the sequence is TGPGIFMLLLIFFAFLHCWLNAFAEM. The Cytoplasmic portion of the chain corresponds to 373–420; that stretch reads LRFGDRMFYRDWWNSTSFSNYYRTWNVVVHDWLYSYVYQDGLWLLGRR. An FYXDWWN motif motif is present at residues 380–386; that stretch reads FYRDWWN. Residues Asn-392, Arg-395, Asn-398, His-402, Tyr-410, and Ser-433 each coordinate an acyl-CoA. A helical transmembrane segment spans residues 421-445; it reads ARGVAMLGVFLVSAVVHEYIFCFVL. Residue His-437 is part of the active site. The Lumenal segment spans residues 446–451; sequence GFFYPV. A helical membrane pass occupies residues 452 to 467; it reads MLMLFLVFGGLLNFTM. Residues 468–473 lie on the Cytoplasmic side of the membrane; it reads NDRHTG. A helical transmembrane segment spans residues 474 to 505; that stretch reads PAWNILMWTFLFMGQGIQVSLYCQEWYARRHC. Over 506–525 the chain is Lumenal; that stretch reads PLPQTTFWGMVTPRSWSCHP.

It belongs to the membrane-bound acyltransferase family. Sterol o-acyltransferase subfamily. As to quaternary structure, may form homo- or heterodimers. Interacts with INSIG1; the interaction is direct and promotes association with AMFR/gp78. In terms of processing, polyubiquitinated by AMFR/gp78 at Cys-280, leading to its degradation when the lipid levels are low. Association with AMFR/gp78 is mediated via interaction with INSIG1. High concentration of cholesterol and fatty acid results in Cys-280 oxidation, preventing ubiquitination at the same site, resulting in protein stabilization. Oxidized at Cys-280: high concentration of cholesterol and fatty acid induce reactive oxygen species, which oxidizes Cys-280, preventing ubiquitination at the same site, and resulting in protein stabilization.

The protein resides in the endoplasmic reticulum membrane. The enzyme catalyses a sterol + a long-chain fatty acyl-CoA = a long-chain 3-hydroxysterol ester + CoA. It carries out the reaction cholesterol + an acyl-CoA = a cholesterol ester + CoA. The catalysed reaction is cholesterol + (9Z)-octadecenoyl-CoA = cholesteryl (9Z-octadecenoate) + CoA. It catalyses the reaction (5Z,8Z,11Z,14Z,17Z)-eicosapentaenoyl-CoA + cholesterol = (5Z,8Z,11Z,14Z,17Z-eicosapentaenoyl)-cholesterol + CoA. The enzyme catalyses (9Z,12Z,15Z)-octadecatrienoyl-CoA + cholesterol = (9Z,12Z,15Z-octadecatrienoyl)-cholesterol + CoA. It carries out the reaction (5Z,8Z,11Z,14Z)-eicosatetraenoyl-CoA + cholesterol = cholesteryl (5Z,8Z,11Z,14Z)-eicosatetraenoate + CoA. In terms of biological role, catalyzes the formation of fatty acid-cholesterol esters, which are less soluble in membranes than cholesterol. Plays a role in lipoprotein assembly and dietary cholesterol absorption. Utilizes oleoyl-CoA ((9Z)-octadecenoyl-CoA) and linolenoyl-CoA ((9Z,12Z,15Z)-octadecatrienoyl-CoA) as substrates. May provide cholesteryl esters for lipoprotein secretion from hepatocytes and intestinal mucosa. This Mus musculus (Mouse) protein is Sterol O-acyltransferase 2.